Consider the following 533-residue polypeptide: uncharacterized protein (533 aa).

A run of 5 helical transmembrane segments spans residues 4-23 (FLAA…GLAI), 28-47 (VFGL…VVST), 57-79 (IVYQ…PAFF), 86-108 (GWKL…WVLI), and 151-173 (VIGY…AVGA). The region spanning 263–347 (LGEERETKIE…VAEVRRFLGD (85 aa)) is the RCK C-terminal domain. Helical transmembrane passes span 352–374 (LADV…GAIP), 379–401 (GGTT…LGAL), 422–444 (LGLA…AALT), and 454–476 (GGLV…VLRL).

Belongs to the AAE transporter (TC 2.A.81) family.

It localises to the cell membrane. This is an uncharacterized protein from Corynebacterium glutamicum (strain ATCC 13032 / DSM 20300 / JCM 1318 / BCRC 11384 / CCUG 27702 / LMG 3730 / NBRC 12168 / NCIMB 10025 / NRRL B-2784 / 534).